We begin with the raw amino-acid sequence, 694 residues long: Elongation factor G (694 aa).

Residues 11-285 (KDYRNIGIMA…AVIDYLPSPL (275 aa)) form the tr-type G domain. GTP-binding positions include 20–27 (AHIDAGKT), 84–88 (DTPGH), and 138–141 (NKMD).

This sequence belongs to the TRAFAC class translation factor GTPase superfamily. Classic translation factor GTPase family. EF-G/EF-2 subfamily.

The protein localises to the cytoplasm. In terms of biological role, catalyzes the GTP-dependent ribosomal translocation step during translation elongation. During this step, the ribosome changes from the pre-translocational (PRE) to the post-translocational (POST) state as the newly formed A-site-bound peptidyl-tRNA and P-site-bound deacylated tRNA move to the P and E sites, respectively. Catalyzes the coordinated movement of the two tRNA molecules, the mRNA and conformational changes in the ribosome. This is Elongation factor G from Mycoplasma mobile (strain ATCC 43663 / 163K / NCTC 11711) (Mesomycoplasma mobile).